We begin with the raw amino-acid sequence, 163 residues long: Putative MucR family transcriptional regulatory protein RA0938 (163 aa).

Belongs to the ros/MucR family.

This chain is Putative MucR family transcriptional regulatory protein RA0938, found in Rhizobium meliloti (strain 1021) (Ensifer meliloti).